The following is a 130-amino-acid chain: UPF0251 protein MmarC5_0986 (130 aa).

The protein belongs to the UPF0251 family.

The chain is UPF0251 protein MmarC5_0986 from Methanococcus maripaludis (strain C5 / ATCC BAA-1333).